A 669-amino-acid polypeptide reads, in one-letter code: Elongation factor G-like protein (669 aa).

The region spanning 7–279 (ESLRNVAIVG…VLIKEAPDPS (273 aa)) is the tr-type G domain. Residues 16 to 23 (GPYGSGKT) are G1. 16-23 (GPYGSGKT) contributes to the GTP binding site. The segment at 59–63 (QMSVE) is G2. The interval 80-83 (DCPG) is G3. GTP-binding positions include 80-84 (DCPGS) and 134-137 (NKMD). The interval 134-137 (NKMD) is G4. A G5 region spans residues 257–259 (AAE).

The protein belongs to the TRAFAC class translation factor GTPase superfamily. Classic translation factor GTPase family. EF-G/EF-2 subfamily.

The chain is Elongation factor G-like protein from Synechocystis sp. (strain ATCC 27184 / PCC 6803 / Kazusa).